The chain runs to 143 residues: Large ribosomal subunit protein uL15 (143 aa).

A disordered region spans residues 1-52 (MKLNTLAPAAGSKSAPKRLGRGIGSGLGKTSGKGHKGQKARSGGYHKVGFEG). Residues 21-31 (RGIGSGLGKTS) are compositionally biased toward gly residues.

The protein belongs to the universal ribosomal protein uL15 family. Part of the 50S ribosomal subunit.

Binds to the 23S rRNA. In Francisella tularensis subsp. novicida (strain U112), this protein is Large ribosomal subunit protein uL15.